The primary structure comprises 218 residues: Ribose-5-phosphate isomerase A (218 aa).

Substrate is bound by residues threonine 28–threonine 31, aspartate 81–aspartate 84, and lysine 94–glycine 97. Glutamate 103 acts as the Proton acceptor in catalysis. Lysine 121 is a binding site for substrate.

This sequence belongs to the ribose 5-phosphate isomerase family. Homodimer.

It catalyses the reaction aldehydo-D-ribose 5-phosphate = D-ribulose 5-phosphate. It participates in carbohydrate degradation; pentose phosphate pathway; D-ribose 5-phosphate from D-ribulose 5-phosphate (non-oxidative stage): step 1/1. Functionally, catalyzes the reversible conversion of ribose-5-phosphate to ribulose 5-phosphate. The protein is Ribose-5-phosphate isomerase A of Shewanella piezotolerans (strain WP3 / JCM 13877).